Consider the following 217-residue polypeptide: NADPH-dependent 3-demethoxyubiquinone 3-hydroxylase, mitochondrial (217 aa).

Residues 1–23 constitute a mitochondrion transit peptide; that stretch reads MSAAGAIAAASVGRLRTGVRRPF. Repeat copies occupy residues 48 to 129 and 130 to 217. Positions 48-217 are 2 X approximate tandem repeats; sequence AVDRIIRVDH…SAAIYLSERF (170 aa). Position 51 (Arg-51) interacts with NADH. Fe cation contacts are provided by Glu-60, Glu-90, His-93, Glu-142, Glu-178, and His-181. Residues Tyr-212 and Arg-216 each coordinate NADH.

It belongs to the COQ7 family. As to quaternary structure, component of a multi-subunit COQ enzyme complex. Interacts with COQ8B and COQ6. Interacts with COQ9. Fe cation serves as cofactor. As to expression, highly expressed in tissues with high energy demand such as heart, muscle, liver, and kidney.

Its subcellular location is the mitochondrion inner membrane. It carries out the reaction a 5-methoxy-2-methyl-3-(all-trans-polyprenyl)benzoquinone + NADH + O2 = a 3-demethylubiquinone + NAD(+) + H2O. It participates in cofactor biosynthesis; ubiquinone biosynthesis. Catalyzes the hydroxylation of the 5-methoxy-2-methyl-3-(all-trans-polyprenyl)benzoquinone at the C6 position and participates in the biosynthesis of ubiquinone. Catalyzes the reaction through a substrate-mediated reduction pathway, whereby NADH shuttles electrons to 5-methoxy-2-methyl-3-(all-trans-decaprenyl)benzoquinone, which then transfers the electrons to the two Fe(3+) centers. The binding of 5-methoxy-2-methyl-3-(all-trans-polyprenyl)benzoquinone (DMQn) mediates reduction of the diiron center by nicotinamide adenine dinucleotide (NADH) and initiates oxygen activation for subsequent DMQ hydroxylation. The physiological substrates are 5-methoxy-2-methyl-3-(all-trans-nonaprenyl)benzoquinone (DMQ(9)) and 5-methoxy-2-methyl-3-(all-trans-decaprenyl)benzoquinone (DMQ(10)), however in vitro the enzyme does not have any specificity concerning the length of the polyprenyl tail, and accepts tails of various lengths with similar efficiency. Also has a structural role in the COQ enzyme complex, stabilizing other COQ polypeptides. Involved in lifespan determination in a ubiquinone-independent manner. Plays a role in modulating mitochondrial stress responses, acting in the nucleus, perhaps via regulating gene expression, independent of its characterized mitochondrial function in ubiquinone biosynthesis. The polypeptide is NADPH-dependent 3-demethoxyubiquinone 3-hydroxylase, mitochondrial (Mus musculus (Mouse)).